We begin with the raw amino-acid sequence, 215 residues long: MPSLLILIFTIEVAVELINTIGAATINNLLWRIFNALPTKLSAQFAEQRKLQQDYLKVRRELNATSSQDEFAKWAKLRRQHDKLLEQLEKKKAALDSTKGNFDKYITGIRWVGTQGLRYFLPFWYAKVPMFWLPYGWFPYYAEWLVSFPRAPMGSVSIASWQLACTGFVVLIKDAITALVVFVMGMRQSNVKQAVPVKAVSGEKASDEKEGKKEL.

The Lumenal portion of the chain corresponds to 1–4 (MPSL). Residues 5-24 (LILIFTIEVAVELINTIGAA) traverse the membrane as a helical segment. Over 25–110 (TINNLLWRIF…NFDKYITGIR (86 aa)) the chain is Cytoplasmic. A coiled-coil region spans residues 72 to 104 (AKWAKLRRQHDKLLEQLEKKKAALDSTKGNFDK). Residues 111–131 (WVGTQGLRYFLPFWYAKVPMF) traverse the membrane as a helical segment. At 132–155 (WLPYGWFPYYAEWLVSFPRAPMGS) the chain is on the lumenal side. A helical transmembrane segment spans residues 156 to 172 (VSIASWQLACTGFVVLI). The Cytoplasmic portion of the chain corresponds to 173-215 (KDAITALVVFVMGMRQSNVKQAVPVKAVSGEKASDEKEGKKEL).

The protein belongs to the WRB/GET1 family. Interacts with GET3.

It localises to the endoplasmic reticulum membrane. In terms of biological role, required for the post-translational delivery of tail-anchored (TA) proteins to the endoplasmic reticulum. Acts as a membrane receptor for soluble GET3, which recognizes and selectively binds the transmembrane domain of TA proteins in the cytosol. In Pyricularia oryzae (strain 70-15 / ATCC MYA-4617 / FGSC 8958) (Rice blast fungus), this protein is Protein GET1.